Here is a 138-residue protein sequence, read N- to C-terminus: Large ribosomal subunit protein bL19 (138 aa).

Belongs to the bacterial ribosomal protein bL19 family.

Its function is as follows. This protein is located at the 30S-50S ribosomal subunit interface and may play a role in the structure and function of the aminoacyl-tRNA binding site. This chain is Large ribosomal subunit protein bL19, found in Rickettsia africae (strain ESF-5).